We begin with the raw amino-acid sequence, 2748 residues long: Chalcone synthase cfoA (2748 aa).

Residues 13–511 (RHAGESCEKV…DTVPRTVIGK (499 aa)) are adenylation (A) domain. The Carrier 1 domain occupies 535–620 (DLIEALVMAE…AVSTYLHGRL (86 aa)). Position 579 is an O-(pantetheine 4'-phosphoryl)serine (S579). The region spanning 641–1073 (VEPIAIVSMA…GTNSHIILEQ (433 aa)) is the Ketosynthase family 3 (KS3) domain. Residues C813, H948, and H995 each act as for beta-ketoacyl synthase activity in the active site. Residues 1196–1489 (FSGQGSWMPT…ATHGTVDKLL (294 aa)) form the Malonyl-CoA:ACP transacylase (MAT) domain. The interval 1561 to 1842 (LGHEMIFNAT…ENSFSMTMTD (282 aa)) is dehydratase (DH) domain. The interval 1563–1707 (HEMIFNATSI…GTFQLISQPN (145 aa)) is N-terminal hotdog fold. One can recognise a PKS/mFAS DH domain in the interval 1563 to 1866 (HEMIFNATSI…LRTWQPTVAG (304 aa)). H1595 (proton acceptor; for dehydratase activity) is an active-site residue. The C-terminal hotdog fold stretch occupies residues 1722–1866 (AESDVNISEA…LRTWQPTVAG (145 aa)). The Proton donor; for dehydratase activity role is filled by D1784. Residues 2031–2210 (GTVLITGGTG…ALSLAWGPWA (180 aa)) form the Ketoreductase (KR) domain. Residues 2305–2383 (NRHDTLLGLV…ALVEYLLPRI (79 aa)) enclose the Carrier 2 domain. S2342 is modified (O-(pantetheine 4'-phosphoryl)serine). The segment at 2386–2426 (EPQPEVDTDSDASTTAGDTSVSRDSGKEDELSPSSSVTTLA) is disordered. Positions 2396-2407 (DASTTAGDTSVS) are enriched in low complexity. Positions 2519 to 2742 (VGLSVYSNLA…GAAGEIERWA (224 aa)) are thioester reductase (TE) domain.

In the N-terminal section; belongs to the NRP synthetase family. The cofactor is pantetheine 4'-phosphate.

It participates in secondary metabolite biosynthesis; flavonoid biosynthesis. Hybrid PKS-NRPS synthetase; part of the gene cluster that mediates the biosynthesis of chlorflavonin, a fungal flavonoid with acetolactate synthase inhibitory activity. Within the pathway, the PKS-NRPS cfoA, is responsible for the generation of the key precursor chalcone. The adenylation (A) domain activates benzoic acid or p-hydroxybenzoic acid which are transferred to the thiol group of the pantetheinyl residue of the T domain, and further transferred to the adjacent PKS portion of cfoA. Within the PKS portion of cfoA, benzoic acid or p-hydroxybenzoic acid act as starter units for respectively four malonyl-CoA molecules for elongation by the AT and KS domains. Afterwards, chalcone is cyclized through Claisen condensation and thereby released either spontaneously or catalyzed by the TE domain. Then, a new type of chalcone isomerase, cfoK, catalyzes the conversion of the chalcone into a flavanone by a histidine-mediated oxa-Michael addition mechanism. The desaturation of flavanone to flavone is catalyzed by a new type of flavone synthase, the flavin mononucleotide (FMN)-dependent oxidoreductase cfoJ. Monooxygenases cfoF, cfoG, and P450 cfoH are responsible for the hydroxylation of the flavonoid skeleton at sites C3, C8, and C2', respectively. Like cfoF, the dehydratase cfoI plays also a role in the hydroxylation of position C3. Methyltransferases cfoB, cfoC, and cfoD then catalyze the methylation of C7-OH, C8-OH, and C3-OH, respectively. Finally, the monooxygenase cfoE is responsible for the chlorination of flavonoid at position C3'. In Aspergillus candidus, this protein is Chalcone synthase cfoA.